Here is a 218-residue protein sequence, read N- to C-terminus: Leucine-rich repeat protein 2 (218 aa).

A signal peptide spans 1–27; sequence MVAQNSRRELLAASLILTLALIRLTEA. 5 LRR repeats span residues 69–93, 94–117, 119–141, 142–165, and 167–190; these read HHQV…LGKL, EHLQ…LGNL, SLIS…LGKL, KSLV…LTVI, and SLKV…PFEH.

Functionally, probably involved in plant defense response. The chain is Leucine-rich repeat protein 2 from Arabidopsis thaliana (Mouse-ear cress).